The chain runs to 320 residues: Putative malonate transporter (320 aa).

Helical transmembrane passes span 1-21 (MAEI…GYLT), 32-52 (MGWL…FKLV), 65-85 (FILT…AIGL), 113-133 (GLAL…IFCF), 167-187 (IAFH…FLSF), 196-216 (LIDY…GVTL), 256-276 (IWVQ…VFVI), and 289-309 (ATIL…LYLI).

The protein belongs to the auxin efflux carrier (TC 2.A.69) family.

It is found in the cell membrane. This Rhizobium meliloti (strain 1021) (Ensifer meliloti) protein is Putative malonate transporter (mdcF).